Reading from the N-terminus, the 304-residue chain is Protease HtpX homolog (304 aa).

The next 2 helical transmembrane spans lie at 19–39 (FIVF…VSYF) and 41–61 (LGEI…YYAY). Residue histidine 146 participates in Zn(2+) binding. Glutamate 147 is an active-site residue. Position 150 (histidine 150) interacts with Zn(2+). 2 helical membrane-spanning segments follow: residues 156–176 (VRLQ…GDGL) and 192–212 (NILG…ATLL). Residue glutamate 221 participates in Zn(2+) binding.

This sequence belongs to the peptidase M48B family. Zn(2+) serves as cofactor.

The protein resides in the cell inner membrane. The protein is Protease HtpX homolog of Dictyoglomus turgidum (strain DSM 6724 / Z-1310).